A 133-amino-acid polypeptide reads, in one-letter code: Large ribosomal subunit protein bL17 (133 aa).

This sequence belongs to the bacterial ribosomal protein bL17 family. Part of the 50S ribosomal subunit. Contacts protein L32.

The chain is Large ribosomal subunit protein bL17 from Thermodesulfovibrio yellowstonii (strain ATCC 51303 / DSM 11347 / YP87).